We begin with the raw amino-acid sequence, 683 residues long: Methionine--tRNA ligase (683 aa).

The 'HIGH' region motif lies at 14–24 (PYANGSIHLGH). Residues Cys-145, Cys-148, Cys-158, and Cys-161 each coordinate Zn(2+). The 'KMSKS' region motif lies at 331–335 (KMSKS). Lys-334 is an ATP binding site. Residues 545–572 (ASKEDLTASQTDTGAAAPAGNGELAKDP) are disordered. Positions 581–683 (TFAAVDLRVA…SGAKPGQRIK (103 aa)) constitute a tRNA-binding domain.

It belongs to the class-I aminoacyl-tRNA synthetase family. MetG type 1 subfamily. In terms of assembly, homodimer. Requires Zn(2+) as cofactor.

The protein resides in the cytoplasm. The catalysed reaction is tRNA(Met) + L-methionine + ATP = L-methionyl-tRNA(Met) + AMP + diphosphate. In terms of biological role, is required not only for elongation of protein synthesis but also for the initiation of all mRNA translation through initiator tRNA(fMet) aminoacylation. In Pseudomonas fluorescens (strain Pf0-1), this protein is Methionine--tRNA ligase.